The chain runs to 579 residues: Glycine--tRNA ligase (579 aa).

Glutamate 175 lines the glycine pocket. Residues 207 to 209 (RNE) and 218 to 219 (RV) contribute to the ATP site. Glutamate 226 provides a ligand contact to glycine. 327 to 328 (EC) is a binding site for ATP. Residue 442 to 444 (EPS) coordinates glycine. Arginine 449 contributes to the ATP binding site.

The protein belongs to the class-II aminoacyl-tRNA synthetase family. As to quaternary structure, homodimer.

The catalysed reaction is tRNA(Gly) + glycine + ATP = glycyl-tRNA(Gly) + AMP + diphosphate. The enzyme catalyses 2 ATP + H(+) = P(1),P(4)-bis(5'-adenosyl) tetraphosphate + diphosphate. Functionally, catalyzes the ATP-dependent ligation of glycine to the 3'-end of its cognate tRNA, via the formation of an aminoacyl-adenylate intermediate (Gly-AMP). Also produces diadenosine tetraphosphate (Ap4A), a universal pleiotropic signaling molecule needed for cell regulation pathways, by direct condensation of 2 ATPs. Thereby, may play a special role in Ap4A homeostasis. The sequence is that of Glycine--tRNA ligase from Encephalitozoon cuniculi (strain GB-M1) (Microsporidian parasite).